Here is a 905-residue protein sequence, read N- to C-terminus: DNA gyrase subunit A (905 aa).

One can recognise a Topo IIA-type catalytic domain in the interval 35 to 524 (IPDVRDGLKP…GEFDQDIEDL (490 aa)). Tyr-123 (O-(5'-phospho-DNA)-tyrosine intermediate) is an active-site residue. The short motif at 551–557 (QKRGGKG) is the GyrA-box element. Residues 882–905 (IAESSDDNEEDSEFEEEVAEEGSE) form a disordered region. Positions 885 to 905 (SSDDNEEDSEFEEEVAEEGSE) are enriched in acidic residues.

Belongs to the type II topoisomerase GyrA/ParC subunit family. Heterotetramer, composed of two GyrA and two GyrB chains. In the heterotetramer, GyrA contains the active site tyrosine that forms a transient covalent intermediate with DNA, while GyrB binds cofactors and catalyzes ATP hydrolysis.

The protein resides in the cytoplasm. The catalysed reaction is ATP-dependent breakage, passage and rejoining of double-stranded DNA.. In terms of biological role, a type II topoisomerase that negatively supercoils closed circular double-stranded (ds) DNA in an ATP-dependent manner to modulate DNA topology and maintain chromosomes in an underwound state. Negative supercoiling favors strand separation, and DNA replication, transcription, recombination and repair, all of which involve strand separation. Also able to catalyze the interconversion of other topological isomers of dsDNA rings, including catenanes and knotted rings. Type II topoisomerases break and join 2 DNA strands simultaneously in an ATP-dependent manner. The protein is DNA gyrase subunit A of Rickettsia bellii (strain RML369-C).